Reading from the N-terminus, the 183-residue chain is Large ribosomal subunit protein uL6 (183 aa).

This sequence belongs to the universal ribosomal protein uL6 family. In terms of assembly, part of the 50S ribosomal subunit.

In terms of biological role, this protein binds to the 23S rRNA, and is important in its secondary structure. It is located near the subunit interface in the base of the L7/L12 stalk, and near the tRNA binding site of the peptidyltransferase center. The chain is Large ribosomal subunit protein uL6 from Chlamydia felis (strain Fe/C-56) (Chlamydophila felis).